The sequence spans 556 residues: Formate--tetrahydrofolate ligase (556 aa).

65 to 72 lines the ATP pocket; that stretch reads TPAGEGKS.

This sequence belongs to the formate--tetrahydrofolate ligase family.

It carries out the reaction (6S)-5,6,7,8-tetrahydrofolate + formate + ATP = (6R)-10-formyltetrahydrofolate + ADP + phosphate. The protein operates within one-carbon metabolism; tetrahydrofolate interconversion. This is Formate--tetrahydrofolate ligase from Clostridium acetobutylicum (strain ATCC 824 / DSM 792 / JCM 1419 / IAM 19013 / LMG 5710 / NBRC 13948 / NRRL B-527 / VKM B-1787 / 2291 / W).